Here is a 492-residue protein sequence, read N- to C-terminus: NADH-quinone oxidoreductase subunit N (492 aa).

14 helical membrane-spanning segments follow: residues 18–38 (ILPM…NAFT), 45–65 (LNMF…LGLE), 80–100 (LSLV…FLAL), 108–128 (FQTA…QFMV), 133–153 (LLLM…LMAL), 167–187 (FTMG…FYLL), 209–229 (MLFA…VSLV), 250–270 (ISIV…GAFI), 277–297 (VEDI…LIAL), 305–325 (MLAY…FIHT), 333–353 (FVYW…LWLL), 381–401 (VAIL…FSVF), 415–435 (NHIL…FYYF), and 464–484 (MPIY…VFMM).

It belongs to the complex I subunit 2 family. In terms of assembly, NDH-1 is composed of 14 different subunits. Subunits NuoA, H, J, K, L, M, N constitute the membrane sector of the complex.

It localises to the cell inner membrane. It carries out the reaction a quinone + NADH + 5 H(+)(in) = a quinol + NAD(+) + 4 H(+)(out). NDH-1 shuttles electrons from NADH, via FMN and iron-sulfur (Fe-S) centers, to quinones in the respiratory chain. The immediate electron acceptor for the enzyme in this species is believed to be ubiquinone. Couples the redox reaction to proton translocation (for every two electrons transferred, four hydrogen ions are translocated across the cytoplasmic membrane), and thus conserves the redox energy in a proton gradient. The sequence is that of NADH-quinone oxidoreductase subunit N from Helicobacter acinonychis (strain Sheeba).